A 315-amino-acid polypeptide reads, in one-letter code: 4-diphosphocytidyl-2-C-methyl-D-erythritol kinase (315 aa).

The active site involves lysine 10. Proline 107 to alanine 117 is an ATP binding site. The active site involves aspartate 148. The segment at histidine 292 to glutamate 315 is disordered.

It belongs to the GHMP kinase family. IspE subfamily.

It catalyses the reaction 4-CDP-2-C-methyl-D-erythritol + ATP = 4-CDP-2-C-methyl-D-erythritol 2-phosphate + ADP + H(+). Its pathway is isoprenoid biosynthesis; isopentenyl diphosphate biosynthesis via DXP pathway; isopentenyl diphosphate from 1-deoxy-D-xylulose 5-phosphate: step 3/6. In terms of biological role, catalyzes the phosphorylation of the position 2 hydroxy group of 4-diphosphocytidyl-2C-methyl-D-erythritol. The sequence is that of 4-diphosphocytidyl-2-C-methyl-D-erythritol kinase from Corynebacterium efficiens (strain DSM 44549 / YS-314 / AJ 12310 / JCM 11189 / NBRC 100395).